We begin with the raw amino-acid sequence, 631 residues long: Phosphomethylpyrimidine synthase (631 aa).

Residues N239, M268, Y297, H333, 353–355 (SRG), 394–397 (DGLR), and E433 contribute to the substrate site. H437 lines the Zn(2+) pocket. Y460 provides a ligand contact to substrate. H501 is a binding site for Zn(2+). [4Fe-4S] cluster contacts are provided by C581, C584, and C589.

Belongs to the ThiC family. Homodimer. The cofactor is [4Fe-4S] cluster.

The catalysed reaction is 5-amino-1-(5-phospho-beta-D-ribosyl)imidazole + S-adenosyl-L-methionine = 4-amino-2-methyl-5-(phosphooxymethyl)pyrimidine + CO + 5'-deoxyadenosine + formate + L-methionine + 3 H(+). It functions in the pathway cofactor biosynthesis; thiamine diphosphate biosynthesis. Its function is as follows. Catalyzes the synthesis of the hydroxymethylpyrimidine phosphate (HMP-P) moiety of thiamine from aminoimidazole ribotide (AIR) in a radical S-adenosyl-L-methionine (SAM)-dependent reaction. The sequence is that of Phosphomethylpyrimidine synthase from Salmonella schwarzengrund (strain CVM19633).